Reading from the N-terminus, the 574-residue chain is Proline--tRNA ligase (574 aa).

The protein belongs to the class-II aminoacyl-tRNA synthetase family. ProS type 1 subfamily. In terms of assembly, homodimer.

Its subcellular location is the cytoplasm. The catalysed reaction is tRNA(Pro) + L-proline + ATP = L-prolyl-tRNA(Pro) + AMP + diphosphate. Catalyzes the attachment of proline to tRNA(Pro) in a two-step reaction: proline is first activated by ATP to form Pro-AMP and then transferred to the acceptor end of tRNA(Pro). As ProRS can inadvertently accommodate and process non-cognate amino acids such as alanine and cysteine, to avoid such errors it has two additional distinct editing activities against alanine. One activity is designated as 'pretransfer' editing and involves the tRNA(Pro)-independent hydrolysis of activated Ala-AMP. The other activity is designated 'posttransfer' editing and involves deacylation of mischarged Ala-tRNA(Pro). The misacylated Cys-tRNA(Pro) is not edited by ProRS. In Nitratidesulfovibrio vulgaris (strain ATCC 29579 / DSM 644 / CCUG 34227 / NCIMB 8303 / VKM B-1760 / Hildenborough) (Desulfovibrio vulgaris), this protein is Proline--tRNA ligase.